The primary structure comprises 90 residues: UPF0367 protein Ava_2513 (90 aa).

The protein belongs to the UPF0367 family.

The protein is UPF0367 protein Ava_2513 of Trichormus variabilis (strain ATCC 29413 / PCC 7937) (Anabaena variabilis).